The chain runs to 567 residues: Zinc finger protein 512 (567 aa).

Positions 1–32 (MSSRLGAVPATSGPTTFKQQRSTRIVGAKNSR) are disordered. The span at 12 to 23 (SGPTTFKQQRST) shows a compositional bias: polar residues. Glycyl lysine isopeptide (Lys-Gly) (interchain with G-Cter in SUMO2) cross-links involve residues lysine 18 and lysine 84. The interval 86–148 (AATSHVEGSG…QARRIRKEPP (63 aa)) is disordered. Residues 119-130 (KKHKLYGRKQRP) are compositionally biased toward basic residues. A C2H2-type 1 zinc finger spans residues 197 to 220 (FTCHHCGKQLRSLAGMKYHVMANH). A Glycyl lysine isopeptide (Lys-Gly) (interchain with G-Cter in SUMO2) cross-link involves residue lysine 227. The C2H2-type 2 zinc finger occupies 287–310 (LKCHHCGKPYRSKAGLAYHLRSEH). Residue lysine 333 forms a Glycyl lysine isopeptide (Lys-Gly) (interchain with G-Cter in SUMO2) linkage. The segment at 406-430 (IQCPNQGCEAVYSSVSGLKAHLGSC) adopts a C2H2-type 3; atypical zinc-finger fold. The C2H2-type 4 zinc finger occupies 440-463 (YKCLLCQKEFVSESGVKYHINSVH). Positions 486–567 (QRQQEEEKRR…PKTNHKRGRK (82 aa)) are disordered. Over residues 495–508 (RQQHRSRRSLRRRQ) the composition is skewed to basic residues. A compositionally biased stretch (basic and acidic residues) spans 523-532 (VGKDQRRNNE). A compositionally biased stretch (basic residues) spans 556–567 (KPPKTNHKRGRK).

It belongs to the krueppel C2H2-type zinc-finger protein family.

It localises to the nucleus. May be involved in transcriptional regulation. The sequence is that of Zinc finger protein 512 (ZNF512) from Homo sapiens (Human).